The following is a 104-amino-acid chain: MRVRALRLAALVGAGAALALSPLAAGPASADTTVSEPAPSCVTLYQSWRYSQADNGCAQTVTVKVVYEDDTEGLCYAVAPGQITTVGDGYIGSHGHARYLARCL.

The first 30 residues, 1 to 30, serve as a signal peptide directing secretion; that stretch reads MRVRALRLAALVGAGAALALSPLAAGPASA. 2 cysteine pairs are disulfide-bonded: cysteine 41–cysteine 57 and cysteine 75–cysteine 103.

In terms of biological role, inhibits mammalian alpha-amylases specifically but has no action on plant and microbial alpha-amylases. Forms a tight stoichiometric 1:1 complex with alpha-amylase. This is Alpha-amylase inhibitor HOE-467A from Streptomyces tendae.